A 146-amino-acid chain; its full sequence is Globin-1 (146 aa).

Positions 9 to 146 (QLTADVKKDL…KLVAVVQAAL (138 aa)) constitute a Globin domain. His101 contributes to the heme b binding site.

It belongs to the globin family. In terms of assembly, homodimer.

Its subcellular location is the cytoplasm. This Anadara broughtonii (Blood clam) protein is Globin-1.